Reading from the N-terminus, the 230-residue chain is MKIIWLGHGSFRIESGEAVLLVDPWLNGNPTLPEDQHDAAVIGATHILLTHTHFDHVVDVLPLARLLKVPVVGQYDLMGYWSEAEEIETVGFNKGGTVTLNGVRVSMVPASHSSTFTTPDGLRSGGSEVGYMIAAEGHVVYLSGDTGIMADMDWMGDYYKPDIGILSAGGHFTMDMQGAAYAAKRYFNFKTVIPCHYRSFPILEQSAQALIDGLPGVEVIEPQVMQAIEV.

It belongs to the UPF0173 family.

This chain is UPF0173 metal-dependent hydrolase SPO2976, found in Ruegeria pomeroyi (strain ATCC 700808 / DSM 15171 / DSS-3) (Silicibacter pomeroyi).